Reading from the N-terminus, the 33-residue chain is Defensin-1 (33 aa).

3 disulfide bridges follow: Cys4–Cys32, Cys6–Cys21, and Cys11–Cys31.

This sequence belongs to the alpha-defensin family.

The protein resides in the secreted. Has antibacterial activity against the Gram-negative bacterium E.coli and the Gram-positive bacteria L.monocytogenes and S.aureus. Has antifungal activity against C.albicans. This Papio hamadryas (Hamadryas baboon) protein is Defensin-1.